The chain runs to 92 residues: Large ribosomal subunit protein bL28 (92 aa).

Belongs to the bacterial ribosomal protein bL28 family.

This Borreliella afzelii (strain PKo) (Borrelia afzelii) protein is Large ribosomal subunit protein bL28.